The sequence spans 296 residues: Fructose-bisphosphate aldolase class 1 (296 aa).

Glu-175 (proton acceptor) is an active-site residue. Lys-212 (schiff-base intermediate with dihydroxyacetone-P) is an active-site residue.

The protein belongs to the class I fructose-bisphosphate aldolase family.

It catalyses the reaction beta-D-fructose 1,6-bisphosphate = D-glyceraldehyde 3-phosphate + dihydroxyacetone phosphate. It functions in the pathway carbohydrate degradation; glycolysis; D-glyceraldehyde 3-phosphate and glycerone phosphate from D-glucose: step 4/4. The sequence is that of Fructose-bisphosphate aldolase class 1 from Staphylococcus aureus (strain MRSA252).